A 433-amino-acid polypeptide reads, in one-letter code: Ligand-dependent corepressor (433 aa).

The disordered stretch occupies residues 1–147 (MQRMIQQFAA…GTREGFGHST (147 aa)). The span at 13–34 (TSKTSSTQDPSQPNSTKNQSLP) shows a compositional bias: polar residues. Residues 36–48 (ASPVTTSPTAATT) show a composition bias toward low complexity. Residue serine 42 is modified to Phosphoserine. Residues 53-57 (LSKLL) carry the Interaction with nuclear receptors motif. Serine 63 carries the post-translational modification Phosphoserine. The span at 88–110 (KKSPCASSTSLSHSPGCSSTQGN) shows a compositional bias: polar residues. A Phosphoserine modification is found at serine 249. Lysine 254 is covalently cross-linked (Glycyl lysine isopeptide (Lys-Gly) (interchain with G-Cter in SUMO2)). The interval 299 to 348 (QNRKSMLDAGPDSWGSDAEQSTSGQPYPTSDQEGDPGSKQPRKKRGRYRQ) is disordered. Polar residues predominate over residues 316–329 (AEQSTSGQPYPTSD). The Nuclear localization signal signature appears at 339-345 (PRKKRGR). One can recognise an HTH psq-type domain in the interval 340–392 (RKKRGRYRQYNSEILEEAISVVMSGKMSVSKAQSIYGIPHSTLEYKVKERLGT). A DNA-binding region (H-T-H motif) is located at residues 368-388 (VSKAQSIYGIPHSTLEYKVKE). A disordered region spans residues 393–412 (LKNPPKKKMKLMRSEGPDVS). Lysine 414 is covalently cross-linked (Glycyl lysine isopeptide (Lys-Gly) (interchain with G-Cter in SUMO2)).

In terms of assembly, interacts with ESR1 and ESR2 in the presence of estradiol. Interacts with CTBP1, HDAC3 and HDAC6. Component of a large corepressor complex that contains about 20 proteins, including CTBP1, CTBP2, HDAC1 and HDAC2. As to expression, detected in heart and kidney.

It localises to the nucleus. Repressor of ligand-dependent transcription activation by various nuclear repressors. Repressor of ligand-dependent transcription activation by ESR1, ESR2, NR3C1, PGR, RARA, RARB, RARG, RXRA and VDR. May act as transcription activator that binds DNA elements with the sequence 5'-CCCTATCGATCGATCTCTACCT-3'. This Mus musculus (Mouse) protein is Ligand-dependent corepressor (Lcor).